Reading from the N-terminus, the 608-residue chain is MLRTHLSGELRKENAGQSVTLTGWVNRRRDHGGVIFIDLRDRTGIAQVVFRNEDVAERAHALRSEFVLRVTGVVEERPEGSQNPNLASGDIEVSVTEFEVLNESAPLPFQIEDSSSAGEVGEETRLKYRYLDLRRPVQANALRLRSAANKAARTVLDSHDFTEIETPTLTRSTPEGARDFLVPARLRPGTFYALPQSPQLFKQLLQVAGMERYYQIARCYRDEDFRADRQPEFTQLDVEMSFVDQDDVIALGEEIISEVWKLIGYEIKTPIPRMTYADAMRRYGSDKPDLRFDIEITECTEFFQDTTFRVFKNEYVGAVVMTGGASQPRRQLDAWQEWAKQRGAKGLAYILVGEDGELSGPVAKNITDAERAGIAAHVGAQPGDCIFFAAGDTKSSLALLGAARGEIAKKLDLIKEGDWAFTWIVDAPMFEPAADATASGDVALGNSKWTAVHHAFTSPKPEFLDNFDTNPGDALAYAYDIVCNGNEIGGGSIRIHQRDVQERVFEVMGITGEEAREKFGFLLDAFAFGAPPHGGIAFGWDRIVSLLGGFDSIRDVIAFPKSGGGIDPLTDAPAAITPQQRKEAGIDAKPKPKAEAQAEAQAEESAEK.

Glutamate 175 is an L-aspartate binding site. The segment at 199 to 202 is aspartate; it reads QLFK. Position 221 (arginine 221) interacts with L-aspartate. Residues 221 to 223 and glutamine 230 each bind ATP; that span reads RDE. L-aspartate is bound at residue histidine 453. Glutamate 487 lines the ATP pocket. L-aspartate is bound at residue arginine 494. An ATP-binding site is contributed by 539 to 542; the sequence is GWDR. A disordered region spans residues 566–608; sequence IDPLTDAPAAITPQQRKEAGIDAKPKPKAEAQAEAQAEESAEK. Over residues 580 to 596 the composition is skewed to basic and acidic residues; sequence QRKEAGIDAKPKPKAEA.

Belongs to the class-II aminoacyl-tRNA synthetase family. Type 1 subfamily. In terms of assembly, homodimer.

Its subcellular location is the cytoplasm. The catalysed reaction is tRNA(Asx) + L-aspartate + ATP = L-aspartyl-tRNA(Asx) + AMP + diphosphate. Its function is as follows. Aspartyl-tRNA synthetase with relaxed tRNA specificity since it is able to aspartylate not only its cognate tRNA(Asp) but also tRNA(Asn). Reaction proceeds in two steps: L-aspartate is first activated by ATP to form Asp-AMP and then transferred to the acceptor end of tRNA(Asp/Asn). This chain is Aspartate--tRNA(Asp/Asn) ligase, found in Corynebacterium glutamicum (strain ATCC 13032 / DSM 20300 / JCM 1318 / BCRC 11384 / CCUG 27702 / LMG 3730 / NBRC 12168 / NCIMB 10025 / NRRL B-2784 / 534).